The following is a 366-amino-acid chain: MMTKNSIEFDPYIERKAFDETKQGVKGLVDAKITEVPRIFHHRQDILTNKKPSASVSDLEIPIIDFASVHADTASREAIVEKVKYAVENWGFFQVINHSIPLNVLEEIKDGVRRFHEEDPEVKKSFFSRDAGNKKFVYNSNFDLYSSSPSVNWRDSFSCYIAPDPPAPEEIPETCRDAMFEYSKHVLSFGGLLFELLSEALGLKSQTLESMDCVKTLLMICHYYPPCPQPDLTLGITKHSDNSFLTLLLQDNIGGLQILHQDSWVDVSPIHGALVVNIGDFLQLITNDKFVSVEHRVLANRQGPRISVASFFSSSMRPNSRVYGPMKELVSEENPPKYRDITIKEYSKIFFEKGLDGTSHLSNIRI.

Positions 215–314 constitute a Fe2OG dioxygenase domain; that stretch reads KTLLMICHYY…RISVASFFSS (100 aa). Fe cation contacts are provided by H239, D241, and H295. R305 contributes to the 2-oxoglutarate binding site.

Belongs to the iron/ascorbate-dependent oxidoreductase family. Requires Fe(2+) as cofactor.

This is 1-aminocyclopropane-1-carboxylate oxidase homolog 12 from Arabidopsis thaliana (Mouse-ear cress).